The primary structure comprises 426 residues: Enolase (426 aa).

Gln163 contributes to the (2R)-2-phosphoglycerate binding site. Catalysis depends on Glu205, which acts as the Proton donor. Asp242, Glu283, and Asp310 together coordinate Mg(2+). (2R)-2-phosphoglycerate-binding residues include Lys335, Arg364, Ser365, and Lys386. Lys335 acts as the Proton acceptor in catalysis.

Belongs to the enolase family. Mg(2+) is required as a cofactor.

Its subcellular location is the cytoplasm. The protein resides in the secreted. It localises to the cell surface. It catalyses the reaction (2R)-2-phosphoglycerate = phosphoenolpyruvate + H2O. It functions in the pathway carbohydrate degradation; glycolysis; pyruvate from D-glyceraldehyde 3-phosphate: step 4/5. Functionally, catalyzes the reversible conversion of 2-phosphoglycerate (2-PG) into phosphoenolpyruvate (PEP). It is essential for the degradation of carbohydrates via glycolysis. In Aquifex aeolicus (strain VF5), this protein is Enolase.